A 337-amino-acid chain; its full sequence is GTPase Obg (337 aa).

The 158-residue stretch at 1-158 (MFVDRVIIEL…HHIELELKLI (158 aa)) folds into the Obg domain. In terms of domain architecture, OBG-type G spans 159 to 330 (ADVGLVGFPN…LIEKMTQRLS (172 aa)). GTP-binding positions include 165–172 (GFPNAGKS), 190–194 (FTTLQ), 212–215 (DIPG), 282–285 (NKID), and 311–313 (SAV). Mg(2+) contacts are provided by Ser172 and Thr192.

Belongs to the TRAFAC class OBG-HflX-like GTPase superfamily. OBG GTPase family. As to quaternary structure, monomer. Mg(2+) serves as cofactor.

The protein localises to the cytoplasm. Its function is as follows. An essential GTPase which binds GTP, GDP and possibly (p)ppGpp with moderate affinity, with high nucleotide exchange rates and a fairly low GTP hydrolysis rate. Plays a role in control of the cell cycle, stress response, ribosome biogenesis and in those bacteria that undergo differentiation, in morphogenesis control. The chain is GTPase Obg from Protochlamydia amoebophila (strain UWE25).